The primary structure comprises 147 residues: uncharacterized protein (147 aa).

This is an uncharacterized protein from Human cytomegalovirus (strain AD169) (HHV-5).